Here is a 397-residue protein sequence, read N- to C-terminus: CCA-adding enzyme (397 aa).

ATP-binding residues include glycine 26 and arginine 29. CTP-binding residues include glycine 26 and arginine 29. Mg(2+) contacts are provided by aspartate 39 and aspartate 41. ATP-binding residues include arginine 110, aspartate 153, arginine 156, arginine 159, and arginine 162. Positions 110, 153, 156, 159, and 162 each coordinate CTP.

It belongs to the tRNA nucleotidyltransferase/poly(A) polymerase family. Bacterial CCA-adding enzyme type 3 subfamily. In terms of assembly, homodimer. Requires Mg(2+) as cofactor.

The catalysed reaction is a tRNA precursor + 2 CTP + ATP = a tRNA with a 3' CCA end + 3 diphosphate. It carries out the reaction a tRNA with a 3' CCA end + 2 CTP + ATP = a tRNA with a 3' CCACCA end + 3 diphosphate. In terms of biological role, catalyzes the addition and repair of the essential 3'-terminal CCA sequence in tRNAs without using a nucleic acid template. Adds these three nucleotides in the order of C, C, and A to the tRNA nucleotide-73, using CTP and ATP as substrates and producing inorganic pyrophosphate. tRNA 3'-terminal CCA addition is required both for tRNA processing and repair. Also involved in tRNA surveillance by mediating tandem CCA addition to generate a CCACCA at the 3' terminus of unstable tRNAs. While stable tRNAs receive only 3'-terminal CCA, unstable tRNAs are marked with CCACCA and rapidly degraded. The polypeptide is CCA-adding enzyme (Bacillus thuringiensis subsp. konkukian (strain 97-27)).